A 291-amino-acid chain; its full sequence is ATP phosphoribosyltransferase (291 aa).

This sequence belongs to the ATP phosphoribosyltransferase family. Long subfamily. Requires Mg(2+) as cofactor.

Its subcellular location is the cytoplasm. The catalysed reaction is 1-(5-phospho-beta-D-ribosyl)-ATP + diphosphate = 5-phospho-alpha-D-ribose 1-diphosphate + ATP. It functions in the pathway amino-acid biosynthesis; L-histidine biosynthesis; L-histidine from 5-phospho-alpha-D-ribose 1-diphosphate: step 1/9. Feedback inhibited by histidine. Functionally, catalyzes the condensation of ATP and 5-phosphoribose 1-diphosphate to form N'-(5'-phosphoribosyl)-ATP (PR-ATP). Has a crucial role in the pathway because the rate of histidine biosynthesis seems to be controlled primarily by regulation of HisG enzymatic activity. This Geotalea daltonii (strain DSM 22248 / JCM 15807 / FRC-32) (Geobacter daltonii) protein is ATP phosphoribosyltransferase.